The following is an 87-amino-acid chain: MKPNIHPEYRTVVFHDTSVDEYFKIGSTIKTDREIELDGVTYPYVTIDVSSKSHPFYTGKLRTVASEGNVARFTQRFGRFVSTKKGS.

This sequence belongs to the bacterial ribosomal protein bL31 family. Type B subfamily. In terms of assembly, part of the 50S ribosomal subunit.

The protein is Large ribosomal subunit protein bL31B of Escherichia coli O8 (strain IAI1).